The chain runs to 353 residues: Guanine nucleotide-binding protein subunit alpha (353 aa).

G2 carries N-myristoyl glycine lipidation. C3 carries the S-palmitoyl cysteine lipid modification. The region spanning 33–353 (NEIKMLLLGA…QLHLRECGLL (321 aa)) is the G-alpha domain. Positions 36-49 (KMLLLGAGESGKST) are G1 motif. GTP contacts are provided by E44, S45, G46, K47, S48, T49, D150, L175, T181, G203, N269, K270, D272, and A325. S48 serves as a coordination point for Mg(2+). The tract at residues 173–181 (DILRSRVKT) is G2 motif. T181 contributes to the Mg(2+) binding site. The segment at 196-205 (YKLFDVGGQR) is G3 motif. The interval 265–272 (ILFLNKID) is G4 motif. The segment at 323–328 (TCATDT) is G5 motif.

Belongs to the G-alpha family. G(q) subfamily. G proteins are composed of 3 units; alpha, beta and gamma. The alpha chain contains the guanine nucleotide binding site. Requires Mg(2+) as cofactor.

Its function is as follows. Guanine nucleotide-binding proteins (G proteins) are involved as modulators or transducers in various transmembrane signaling systems. In Coprinellus congregatus (Inky cap fungus), this protein is Guanine nucleotide-binding protein subunit alpha (CGP1).